The sequence spans 318 residues: Thymidylate synthase (318 aa).

Residues R25 and 180-181 (RR) contribute to the dUMP site. The active-site Nucleophile is the C200. DUMP contacts are provided by residues 220–223 (RSGD), N231, and 261–263 (HIY). Residue D223 coordinates (6R)-5,10-methylene-5,6,7,8-tetrahydrofolate. A317 is a (6R)-5,10-methylene-5,6,7,8-tetrahydrofolate binding site.

This sequence belongs to the thymidylate synthase family. Bacterial-type ThyA subfamily. In terms of assembly, homodimer.

Its subcellular location is the cytoplasm. The enzyme catalyses dUMP + (6R)-5,10-methylene-5,6,7,8-tetrahydrofolate = 7,8-dihydrofolate + dTMP. The protein operates within pyrimidine metabolism; dTTP biosynthesis. In terms of biological role, catalyzes the reductive methylation of 2'-deoxyuridine-5'-monophosphate (dUMP) to 2'-deoxythymidine-5'-monophosphate (dTMP) while utilizing 5,10-methylenetetrahydrofolate (mTHF) as the methyl donor and reductant in the reaction, yielding dihydrofolate (DHF) as a by-product. This enzymatic reaction provides an intracellular de novo source of dTMP, an essential precursor for DNA biosynthesis. The sequence is that of Thymidylate synthase from Bacillus cereus (strain ATCC 14579 / DSM 31 / CCUG 7414 / JCM 2152 / NBRC 15305 / NCIMB 9373 / NCTC 2599 / NRRL B-3711).